Reading from the N-terminus, the 103-residue chain is Putative double-stranded DNA mimic protein HAPS_1002 (103 aa).

Belongs to the putative dsDNA mimic protein family.

Functionally, may act as a double-stranded DNA (dsDNA) mimic. Probably regulates the activity of a dsDNA-binding protein. This is Putative double-stranded DNA mimic protein HAPS_1002 from Glaesserella parasuis serovar 5 (strain SH0165) (Haemophilus parasuis).